We begin with the raw amino-acid sequence, 309 residues long: Protein FdhE homolog (309 aa).

Residues 1-22 (MSIRIVPQEQLEQNGKSTPEGH) are disordered.

It belongs to the FdhE family.

Its subcellular location is the cytoplasm. Functionally, necessary for formate dehydrogenase activity. The polypeptide is Protein FdhE homolog (Pectobacterium carotovorum subsp. carotovorum (strain PC1)).